Here is a 260-residue protein sequence, read N- to C-terminus: Hydroxyethylthiazole kinase (260 aa).

Methionine 49 serves as a coordination point for substrate. The ATP site is built by arginine 124 and threonine 170. Position 197 (glycine 197) interacts with substrate.

The protein belongs to the Thz kinase family. Mg(2+) serves as cofactor.

It catalyses the reaction 5-(2-hydroxyethyl)-4-methylthiazole + ATP = 4-methyl-5-(2-phosphooxyethyl)-thiazole + ADP + H(+). The protein operates within cofactor biosynthesis; thiamine diphosphate biosynthesis; 4-methyl-5-(2-phosphoethyl)-thiazole from 5-(2-hydroxyethyl)-4-methylthiazole: step 1/1. Its function is as follows. Catalyzes the phosphorylation of the hydroxyl group of 4-methyl-5-beta-hydroxyethylthiazole (THZ). The chain is Hydroxyethylthiazole kinase from Yersinia enterocolitica serotype O:8 / biotype 1B (strain NCTC 13174 / 8081).